We begin with the raw amino-acid sequence, 173 residues long: Phosphopantetheine adenylyltransferase (173 aa).

Substrate is bound at residue threonine 9. ATP is bound by residues 9–10 (TF) and histidine 17. 3 residues coordinate substrate: lysine 41, threonine 75, and arginine 89. ATP contacts are provided by residues 90–92 (GLR), glutamate 100, and 125–131 (HIYLSSS).

The protein belongs to the bacterial CoaD family. Homohexamer. Mg(2+) is required as a cofactor.

It localises to the cytoplasm. The enzyme catalyses (R)-4'-phosphopantetheine + ATP + H(+) = 3'-dephospho-CoA + diphosphate. It participates in cofactor biosynthesis; coenzyme A biosynthesis; CoA from (R)-pantothenate: step 4/5. Its function is as follows. Reversibly transfers an adenylyl group from ATP to 4'-phosphopantetheine, yielding dephospho-CoA (dPCoA) and pyrophosphate. In Methylacidiphilum infernorum (isolate V4) (Methylokorus infernorum (strain V4)), this protein is Phosphopantetheine adenylyltransferase.